A 153-amino-acid chain; its full sequence is Small ribosomal subunit protein uS13 (153 aa).

It belongs to the universal ribosomal protein uS13 family.

The protein localises to the cytoplasm. Functionally, located at the top of the head of the 40S subunit, it contacts several helices of the 18S rRNA. In Chlamydomonas reinhardtii (Chlamydomonas smithii), this protein is Small ribosomal subunit protein uS13 (RPS18).